A 507-amino-acid chain; its full sequence is Sterol 14-alpha demethylase CYP51A (507 aa).

A helical transmembrane segment spans residues 7–29 (YPLWVLVALFAVIIANLLYQQLP). Tyr-105 serves as a coordination point for lanosterol. A heme-binding site is contributed by Cys-449.

Belongs to the cytochrome P450 family. The cofactor is heme.

The protein localises to the endoplasmic reticulum membrane. The enzyme catalyses a 14alpha-methyl steroid + 3 reduced [NADPH--hemoprotein reductase] + 3 O2 = a Delta(14) steroid + formate + 3 oxidized [NADPH--hemoprotein reductase] + 4 H2O + 4 H(+). It carries out the reaction a 14alpha-methyl steroid + reduced [NADPH--hemoprotein reductase] + O2 = a 14alpha-hydroxymethyl steroid + oxidized [NADPH--hemoprotein reductase] + H2O + H(+). The catalysed reaction is a 14alpha-hydroxymethyl steroid + reduced [NADPH--hemoprotein reductase] + O2 = a 14alpha-formyl steroid + oxidized [NADPH--hemoprotein reductase] + 2 H2O + H(+). It catalyses the reaction a 14alpha-formyl steroid + reduced [NADPH--hemoprotein reductase] + O2 = a Delta(14) steroid + formate + oxidized [NADPH--hemoprotein reductase] + H2O + 2 H(+). The enzyme catalyses lanosterol + 3 reduced [NADPH--hemoprotein reductase] + 3 O2 = 4,4-dimethyl-5alpha-cholesta-8,14,24-trien-3beta-ol + formate + 3 oxidized [NADPH--hemoprotein reductase] + 4 H2O + 4 H(+). It carries out the reaction lanosterol + reduced [NADPH--hemoprotein reductase] + O2 = 32-hydroxylanosterol + oxidized [NADPH--hemoprotein reductase] + H2O + H(+). The catalysed reaction is 32-hydroxylanosterol + reduced [NADPH--hemoprotein reductase] + O2 = 32-oxolanosterol + oxidized [NADPH--hemoprotein reductase] + 2 H2O + H(+). It catalyses the reaction 32-oxolanosterol + reduced [NADPH--hemoprotein reductase] + O2 = 4,4-dimethyl-5alpha-cholesta-8,14,24-trien-3beta-ol + formate + oxidized [NADPH--hemoprotein reductase] + H2O + 2 H(+). The enzyme catalyses eburicol + 3 reduced [NADPH--hemoprotein reductase] + 3 O2 = 14-demethyleburicol + formate + 3 oxidized [NADPH--hemoprotein reductase] + 4 H2O + 4 H(+). It carries out the reaction eburicol + reduced [NADPH--hemoprotein reductase] + O2 = 32-hydroxyeburicol + oxidized [NADPH--hemoprotein reductase] + H2O + H(+). The catalysed reaction is 32-hydroxyeburicol + reduced [NADPH--hemoprotein reductase] + O2 = 32-oxoeburicol + oxidized [NADPH--hemoprotein reductase] + 2 H2O + H(+). It catalyses the reaction 32-oxoeburicol + reduced [NADPH--hemoprotein reductase] + O2 = 14-demethyleburicol + formate + oxidized [NADPH--hemoprotein reductase] + H2O + 2 H(+). It participates in steroid metabolism; ergosterol biosynthesis. In terms of biological role, together with cyp51B and cyp51C, encodes the sterol 14alpha-demethylase that plays a critical role in the third module of ergosterol biosynthesis pathway, being ergosterol the major sterol component in fungal membranes that participates in a variety of functions. CYP51A encodes the sterol 14-alpha-demethylase induced on ergosterol depletion and is responsible for the intrinsic variation in azole sensitivity. The third module or late pathway involves the ergosterol synthesis itself through consecutive reactions that mainly occur in the endoplasmic reticulum (ER) membrane. In filamentous fungi, during the initial step of this module, lanosterol (lanosta-8,24-dien-3beta-ol) can be metabolized to eburicol. Sterol 14alpha-demethylase catalyzes the three-step oxidative removal of the 14alpha-methyl group (C-32) of both these sterols in the form of formate, and converts eburicol and lanosterol to 14-demethyleburicol (4,4,24-trimethylergosta-8,14,24(28)-trienol) and 4,4-dimethyl-5alpha-cholesta-8,14,24-trien-3beta-ol, respectively, which are further metabolized by other enzymes in the pathway to ergosterol. Can also use substrates not intrinsic to fungi, such as 24,25-dihydrolanosterol (DHL), producing 4,4'-dimethyl-8,14-cholestadien-3-beta-ol, but at lower rates than the endogenous substrates. The chain is Sterol 14-alpha demethylase CYP51A from Gibberella zeae (strain ATCC MYA-4620 / CBS 123657 / FGSC 9075 / NRRL 31084 / PH-1) (Wheat head blight fungus).